The chain runs to 413 residues: MNTKISPLIKESLNKELKRQQSHIELIASENYVSKAVLELNGSVLTNKYAEGYPGKRYYGGCEFIDEIESLGIQTAKELFHAEHANIQPHSGSQANDAAYKALLEPKDRVVAMSLDAGGHLTHGYPINFSGYTYDFRFYGVNKDTEQLDYQEIEKIVLEHKPKLIVAGASAYSRIIDFKKFKEIADKVGAYLMVDMAHIAGLVAAGVHPNPLEYADIVTTTTHKTLRGARGGLILCKQEFAKKVDLAVFPGSQGGPLENLIAGKTQALLEASTDEFKEYGKQIVKNTKALANVLQENGLRLVAGGSDNHLINVDVKSTLRITGKKAEKILESIGIICNKNMIPFDTEKPFYTSGIRLGTPAMTTRGFKEEEFKQVGLIIVNALKDPSEENLEKLAKQVTSLCEKFPIYQNIKY.

(6S)-5,6,7,8-tetrahydrofolate-binding positions include Leu115 and 119-121 (GHL). Lys224 is modified (N6-(pyridoxal phosphate)lysine).

Belongs to the SHMT family. Homodimer. Pyridoxal 5'-phosphate serves as cofactor.

The protein localises to the cytoplasm. It catalyses the reaction (6R)-5,10-methylene-5,6,7,8-tetrahydrofolate + glycine + H2O = (6S)-5,6,7,8-tetrahydrofolate + L-serine. The protein operates within one-carbon metabolism; tetrahydrofolate interconversion. Its pathway is amino-acid biosynthesis; glycine biosynthesis; glycine from L-serine: step 1/1. Functionally, catalyzes the reversible interconversion of serine and glycine with tetrahydrofolate (THF) serving as the one-carbon carrier. This reaction serves as the major source of one-carbon groups required for the biosynthesis of purines, thymidylate, methionine, and other important biomolecules. Also exhibits THF-independent aldolase activity toward beta-hydroxyamino acids, producing glycine and aldehydes, via a retro-aldol mechanism. This chain is Serine hydroxymethyltransferase, found in Mycoplasma mycoides subsp. mycoides SC (strain CCUG 32753 / NCTC 10114 / PG1).